We begin with the raw amino-acid sequence, 445 residues long: 2-oxoisovalerate dehydrogenase subunit alpha, mitochondrial (445 aa).

The N-terminal 45 residues, 1-45 (MAVAIAAARVWRLNRGLSQAALLLLRQPGARGLARSHPPRQQQQF), are a transit peptide targeting the mitochondrion. The interval 33–52 (LARSHPPRQQQQFSSLDDKP) is disordered. Positions 158 and 159 each coordinate thiamine diphosphate. K(+) is bound at residue serine 206. Thiamine diphosphate is bound at residue serine 207. 3 residues coordinate K(+): proline 208, threonine 211, and glutamine 212. Mg(2+) is bound at residue glutamate 238. The thiamine diphosphate site is built by glycine 239, alanine 240, and arginine 265. Mg(2+) contacts are provided by asparagine 267 and tyrosine 269. Histidine 336 contributes to the thiamine diphosphate binding site. Position 337 is a phosphoserine; by BCKDK (serine 337). Threonine 338 is subject to Phosphothreonine. A phosphoserine mark is found at serine 339 and serine 347. Lysine 356 is subject to N6-acetyllysine; alternate. Lysine 356 carries the post-translational modification N6-succinyllysine; alternate. Lysine 380 is modified (N6-succinyllysine).

Belongs to the BCKDHA family. In terms of assembly, heterotetramer of 2 alpha/BCKDHA and 2 beta chains/BCKDHB that forms the branched-chain alpha-keto acid decarboxylase (E1) component of the BCKD complex. The branched-chain alpha-ketoacid dehydrogenase is a large complex composed of three major building blocks E1, E2 and E3. It is organized around E2, a 24-meric cubic core composed of DBT, to which are associated 6 to 12 copies of E1, and approximately 6 copies of the dehydrogenase E3, a DLD dimer. Interacts with PPM1K. Requires thiamine diphosphate as cofactor. The cofactor is Mg(2+). Phosphorylated at Ser-337 by BCKDK and dephosphorylated by protein phosphatase PPM1K.

Its subcellular location is the mitochondrion matrix. It carries out the reaction N(6)-[(R)-lipoyl]-L-lysyl-[protein] + 3-methyl-2-oxobutanoate + H(+) = N(6)-[(R)-S(8)-2-methylpropanoyldihydrolipoyl]-L-lysyl-[protein] + CO2. Its function is as follows. Together with BCKDHB forms the heterotetrameric E1 subunit of the mitochondrial branched-chain alpha-ketoacid dehydrogenase (BCKD) complex. The BCKD complex catalyzes the multi-step oxidative decarboxylation of alpha-ketoacids derived from the branched-chain amino-acids valine, leucine and isoleucine producing CO2 and acyl-CoA which is subsequently utilized to produce energy. The E1 subunit catalyzes the first step with the decarboxylation of the alpha-ketoacid forming an enzyme-product intermediate. A reductive acylation mediated by the lipoylamide cofactor of E2 extracts the acyl group from the E1 active site for the next step of the reaction. This is 2-oxoisovalerate dehydrogenase subunit alpha, mitochondrial from Homo sapiens (Human).